The following is a 547-amino-acid chain: Nuclear speckle splicing regulatory protein 1 (547 aa).

The interval 25-51 is disordered; that stretch reads KPSVFGNDSDDDEASVSESLQREAAKK. Phosphoserine is present on residues Ser27 and Ser33. Residues 103–177 are a coiled coil; that stretch reads IHNLLKAVEI…EARLDVTKQK (75 aa). Residues 105 to 169 form a necessary for alternative splicing activity region; it reads NLLKAVEIRK…REKRAAALEA (65 aa). The tract at residues 188 to 523 is disordered; it reads NQAVGEEAVP…KRSNEETVMS (336 aa). Glycyl lysine isopeptide (Lys-Gly) (interchain with G-Cter in SUMO2) cross-links involve residues Lys198 and Lys209. The segment covering 200–217 has biased composition (basic and acidic residues); the sequence is SFREARTVIKEEKLRGYP. Residues 223 to 232 show a composition bias toward polar residues; that stretch reads ENRPQQNCAL. Over residues 237-254 the composition is skewed to acidic residues; it reads EEAEENPDADSDSEESCD. Phosphoserine is present on residues Ser247 and Ser252. The span at 255–269 shows a compositional bias: basic and acidic residues; sequence DGERGDHKVKSRGEE. Lys276 bears the N6-acetyllysine mark. Positions 277–287 are enriched in basic residues; the sequence is YLKHHKNHTHS. Residue Lys279 forms a Glycyl lysine isopeptide (Lys-Gly) (interchain with G-Cter in SUMO2) linkage. Over residues 308–339 the composition is skewed to basic and acidic residues; that stretch reads RGHEHKGGQHQDRQSRDQESCHKDRSHREEKS. Residues 340–355 show a composition bias toward basic residues; that stretch reads SHRHREASHKDHHWKR. Composition is skewed to basic and acidic residues over residues 356–480 and 490–506; these read HEHE…KPPR and RLTE…ERPP. A coiled-coil region spans residues 376–417; the sequence is KREKYSSREQEKDRQWNDHDRYSEKEKKGKEKEEHRKARRER. Ser447 bears the Phosphoserine mark.

The protein belongs to the NSRP1 family. As to quaternary structure, interacts (via C-terminus) with SRSF1. Interacts (via C-terminus) with SRSF2.

It is found in the nucleus. It localises to the nucleus speckle. RNA-binding protein that mediates pre-mRNA alternative splicing regulation. In Rattus norvegicus (Rat), this protein is Nuclear speckle splicing regulatory protein 1 (Nsrp1).